The following is a 131-amino-acid chain: Aspartate 1-decarboxylase (131 aa).

S25 (schiff-base intermediate with substrate; via pyruvic acid) is an active-site residue. Pyruvic acid (Ser) is present on S25. A substrate-binding site is contributed by T57. Y58 (proton donor) is an active-site residue. 73-75 (GAA) is a substrate binding site.

Belongs to the PanD family. Heterooctamer of four alpha and four beta subunits. The cofactor is pyruvate. Is synthesized initially as an inactive proenzyme, which is activated by self-cleavage at a specific serine bond to produce a beta-subunit with a hydroxyl group at its C-terminus and an alpha-subunit with a pyruvoyl group at its N-terminus.

The protein resides in the cytoplasm. The enzyme catalyses L-aspartate + H(+) = beta-alanine + CO2. Its pathway is cofactor biosynthesis; (R)-pantothenate biosynthesis; beta-alanine from L-aspartate: step 1/1. Its function is as follows. Catalyzes the pyruvoyl-dependent decarboxylation of aspartate to produce beta-alanine. This is Aspartate 1-decarboxylase from Anaeromyxobacter sp. (strain K).